Here is a 290-residue protein sequence, read N- to C-terminus: MRAPLLLESRDYLLSEQMPVAVTNRYPQETFVEHTHQFCEIVIVWRGNGLHVLNDHPYRITCGDVFYIQAADHHSYESVHDLVLDNIIYCPERLHLNAQWHKLLPPLGPEQNQGYWRLTTQGMAQARPIIQQLAQESRKTDSWSIQLTEVLLLQLAIVLKRHRYRAEQAHLLPDGEQLDLIMSALQQSLGAYFDMADFCHKNQLVERSLKQLFRQQTGMSISHYLRQIRLCHAKCLLRGSEHRISDIAARCGFEDSNYFSAVFTREAGMTPRDYRQRFIRSPVLPAKNEP.

The HTH araC/xylS-type domain maps to 179–277 (DLIMSALQQS…GMTPRDYRQR (99 aa)). 2 DNA-binding regions (H-T-H motif) span residues 196-217 (ADFCHKNQLVERSLKQLFRQQT) and 244-267 (ISDIAARCGFEDSNYFSAVFTREA).

In terms of assembly, binds DNA as a dimer.

The protein resides in the cytoplasm. Activates expression of the rhaSR operon in response to L-rhamnose. The chain is HTH-type transcriptional activator RhaR from Yersinia pestis bv. Antiqua (strain Antiqua).